Consider the following 152-residue polypeptide: Regulatory protein RecX (152 aa).

This sequence belongs to the RecX family.

Its subcellular location is the cytoplasm. Functionally, modulates RecA activity. The polypeptide is Regulatory protein RecX (Chromobacterium violaceum (strain ATCC 12472 / DSM 30191 / JCM 1249 / CCUG 213 / NBRC 12614 / NCIMB 9131 / NCTC 9757 / MK)).